Here is a 295-residue protein sequence, read N- to C-terminus: Maintenance of mitochondrial morphology protein 1 (295 aa).

Residues 1–12 lie on the Lumenal side of the membrane; it reads MVQLFHLTFTQG. The helical transmembrane segment at 13–33 threads the bilayer; that stretch reads FFIGQLSVIVIVYIFLRFFLF. The Cytoplasmic portion of the chain corresponds to 34 to 295; sequence CTKEELKNVQ…REGHRQKSTE (262 aa). The SMP-LTD domain occupies 81–278; it reads EEESLDWFNV…SPQFQQISIP (198 aa).

Belongs to the MMM1 family. In terms of assembly, homodimer. Component of the ER-mitochondria encounter structure (ERMES) or MDM complex, composed of mmm1, mdm10, mdm12 and mdm34. A mmm1 homodimer associates with one molecule of mdm12 on each side in a pairwise head-to-tail manner, and the SMP-LTD domains of mmm1 and mdm12 generate a continuous hydrophobic tunnel for phospholipid trafficking.

It is found in the endoplasmic reticulum membrane. Functionally, component of the ERMES/MDM complex, which serves as a molecular tether to connect the endoplasmic reticulum (ER) and mitochondria. Components of this complex are involved in the control of mitochondrial shape and protein biogenesis, and function in nonvesicular lipid trafficking between the ER and mitochondria. The mdm12-mmm1 subcomplex functions in the major beta-barrel assembly pathway that is responsible for biogenesis of all outer membrane beta-barrel proteins, and acts in a late step after the SAM complex. The mdm10-mdm12-mmm1 subcomplex further acts in the TOM40-specific pathway after the action of the mdm12-mmm1 complex. Essential for establishing and maintaining the structure of mitochondria and maintenance of mtDNA nucleoids. This is Maintenance of mitochondrial morphology protein 1 from Schizosaccharomyces japonicus (strain yFS275 / FY16936) (Fission yeast).